We begin with the raw amino-acid sequence, 330 residues long: Ketol-acid reductoisomerase (NADP(+)) (330 aa).

One can recognise a KARI N-terminal Rossmann domain in the interval 1-181 (MNVYYEKDAD…GGTKAGVIET (181 aa)). Residues 24–27 (YGSQ), R47, S50, S52, and 82–85 (DQNQ) each bind NADP(+). H107 is an active-site residue. G133 contributes to the NADP(+) binding site. Residues 182–327 (NFKNETETDL…AKLRNMMSWL (146 aa)) enclose the KARI C-terminal knotted domain. The Mg(2+) site is built by D190, E194, E226, and E230. S251 contributes to the substrate binding site.

The protein belongs to the ketol-acid reductoisomerase family. It depends on Mg(2+) as a cofactor.

The catalysed reaction is (2R)-2,3-dihydroxy-3-methylbutanoate + NADP(+) = (2S)-2-acetolactate + NADPH + H(+). It catalyses the reaction (2R,3R)-2,3-dihydroxy-3-methylpentanoate + NADP(+) = (S)-2-ethyl-2-hydroxy-3-oxobutanoate + NADPH + H(+). Its pathway is amino-acid biosynthesis; L-isoleucine biosynthesis; L-isoleucine from 2-oxobutanoate: step 2/4. It functions in the pathway amino-acid biosynthesis; L-valine biosynthesis; L-valine from pyruvate: step 2/4. Functionally, involved in the biosynthesis of branched-chain amino acids (BCAA). Catalyzes an alkyl-migration followed by a ketol-acid reduction of (S)-2-acetolactate (S2AL) to yield (R)-2,3-dihydroxy-isovalerate. In the isomerase reaction, S2AL is rearranged via a Mg-dependent methyl migration to produce 3-hydroxy-3-methyl-2-ketobutyrate (HMKB). In the reductase reaction, this 2-ketoacid undergoes a metal-dependent reduction by NADPH to yield (R)-2,3-dihydroxy-isovalerate. In Chlorobium chlorochromatii (strain CaD3), this protein is Ketol-acid reductoisomerase (NADP(+)).